The primary structure comprises 294 residues: 4-hydroxy-tetrahydrodipicolinate synthase (294 aa).

Position 48 (threonine 48) interacts with pyruvate. Catalysis depends on tyrosine 136, which acts as the Proton donor/acceptor. Lysine 164 (schiff-base intermediate with substrate) is an active-site residue. Isoleucine 206 contacts pyruvate.

It belongs to the DapA family. In terms of assembly, homotetramer; dimer of dimers.

It localises to the cytoplasm. The catalysed reaction is L-aspartate 4-semialdehyde + pyruvate = (2S,4S)-4-hydroxy-2,3,4,5-tetrahydrodipicolinate + H2O + H(+). It functions in the pathway amino-acid biosynthesis; L-lysine biosynthesis via DAP pathway; (S)-tetrahydrodipicolinate from L-aspartate: step 3/4. Functionally, catalyzes the condensation of (S)-aspartate-beta-semialdehyde [(S)-ASA] and pyruvate to 4-hydroxy-tetrahydrodipicolinate (HTPA). This Phenylobacterium zucineum (strain HLK1) protein is 4-hydroxy-tetrahydrodipicolinate synthase.